Here is a 305-residue protein sequence, read N- to C-terminus: Dihydroorotate dehydrogenase B (NAD(+)), catalytic subunit (305 aa).

FMN-binding positions include Ser-23 and 47-48 (KG). Substrate is bound by residues Lys-47 and 71 to 75 (NAIGL). FMN contacts are provided by Asn-101 and Asn-129. Position 129 (Asn-129) interacts with substrate. Residue Cys-132 is the Nucleophile of the active site. FMN-binding residues include Lys-167 and Ile-193. 194–195 (NT) is a binding site for substrate. FMN-binding positions include Gly-219, 245–246 (GG), and 267–268 (GT).

Belongs to the dihydroorotate dehydrogenase family. Type 1 subfamily. As to quaternary structure, heterotetramer of 2 PyrK and 2 PyrD type B subunits. FMN is required as a cofactor.

The protein resides in the cytoplasm. The catalysed reaction is (S)-dihydroorotate + NAD(+) = orotate + NADH + H(+). It participates in pyrimidine metabolism; UMP biosynthesis via de novo pathway; orotate from (S)-dihydroorotate (NAD(+) route): step 1/1. Functionally, catalyzes the conversion of dihydroorotate to orotate with NAD(+) as electron acceptor. This Geotalea daltonii (strain DSM 22248 / JCM 15807 / FRC-32) (Geobacter daltonii) protein is Dihydroorotate dehydrogenase B (NAD(+)), catalytic subunit (pyrD).